Here is a 188-residue protein sequence, read N- to C-terminus: NAD(P)H-quinone oxidoreductase subunit 6, chloroplastic (188 aa).

The next 5 membrane-spanning stretches (helical) occupy residues 10-30 (GILLIIELGILLGSMGVILLN), 32-52 (IVQSAFSLGLTFISISLLYLV), 61-81 (AQVLIYVGAINVLIVFSVMLI), 97-117 (GNNITLIVCTSLFLFLVSIIL), and 153-173 (FLLPFELLSVLLLVALVGAIT).

This sequence belongs to the complex I subunit 6 family. NDH is composed of at least 16 different subunits, 5 of which are encoded in the nucleus.

The protein resides in the plastid. It is found in the chloroplast thylakoid membrane. It carries out the reaction a plastoquinone + NADH + (n+1) H(+)(in) = a plastoquinol + NAD(+) + n H(+)(out). The enzyme catalyses a plastoquinone + NADPH + (n+1) H(+)(in) = a plastoquinol + NADP(+) + n H(+)(out). In terms of biological role, NDH shuttles electrons from NAD(P)H:plastoquinone, via FMN and iron-sulfur (Fe-S) centers, to quinones in the photosynthetic chain and possibly in a chloroplast respiratory chain. The immediate electron acceptor for the enzyme in this species is believed to be plastoquinone. Couples the redox reaction to proton translocation, and thus conserves the redox energy in a proton gradient. The protein is NAD(P)H-quinone oxidoreductase subunit 6, chloroplastic (ndhG) of Psilotum nudum (Whisk fern).